The following is a 90-amino-acid chain: Sakacin-A immunity factor (90 aa).

Functionally, imparts immunity to sakacin-A to naturally sensitive host strains. This chain is Sakacin-A immunity factor (saiA), found in Latilactobacillus sakei (Lactobacillus sakei).